The sequence spans 325 residues: Elongation factor P--(R)-beta-lysine ligase (325 aa).

Ser-76–Glu-78 lines the substrate pocket. ATP-binding positions include Arg-100–Glu-102 and Asn-109. Tyr-118 provides a ligand contact to substrate. Glu-244 to Leu-245 serves as a coordination point for ATP. Glu-251 is a binding site for substrate. ATP is bound at residue Gly-300.

This sequence belongs to the class-II aminoacyl-tRNA synthetase family. EpmA subfamily. Homodimer.

The catalysed reaction is D-beta-lysine + L-lysyl-[protein] + ATP = N(6)-((3R)-3,6-diaminohexanoyl)-L-lysyl-[protein] + AMP + diphosphate + H(+). Functionally, with EpmB is involved in the beta-lysylation step of the post-translational modification of translation elongation factor P (EF-P). Catalyzes the ATP-dependent activation of (R)-beta-lysine produced by EpmB, forming a lysyl-adenylate, from which the beta-lysyl moiety is then transferred to the epsilon-amino group of a conserved specific lysine residue in EF-P. This Pectobacterium carotovorum subsp. carotovorum (strain PC1) protein is Elongation factor P--(R)-beta-lysine ligase.